The sequence spans 497 residues: Galactose-1-phosphate uridylyltransferase (497 aa).

It belongs to the galactose-1-phosphate uridylyltransferase type 2 family.

It is found in the cytoplasm. The catalysed reaction is alpha-D-galactose 1-phosphate + UDP-alpha-D-glucose = alpha-D-glucose 1-phosphate + UDP-alpha-D-galactose. The protein operates within carbohydrate metabolism; galactose metabolism. In Clostridium acetobutylicum (strain ATCC 824 / DSM 792 / JCM 1419 / IAM 19013 / LMG 5710 / NBRC 13948 / NRRL B-527 / VKM B-1787 / 2291 / W), this protein is Galactose-1-phosphate uridylyltransferase.